A 961-amino-acid polypeptide reads, in one-letter code: Thrombospondin-4 (961 aa).

The signal sequence occupies residues 1 to 23; that stretch reads MLAPRGATFLLLHLALQPWLGAG. In terms of domain architecture, Laminin G-like spans 24-192; that stretch reads AQATPQVFDL…LEELKLVVRG (169 aa). An EGF-like 1 domain is found at 286-325; that stretch reads PVRRCDSNPCFRGVRCTDTRDGFQCGPCPEGYTGNGIVCS. Disulfide bonds link cysteine 290–cysteine 301, cysteine 295–cysteine 310, cysteine 313–cysteine 324, cysteine 330–cysteine 341, cysteine 335–cysteine 350, cysteine 353–cysteine 377, cysteine 383–cysteine 394, cysteine 388–cysteine 403, cysteine 406–cysteine 418, cysteine 424–cysteine 438, cysteine 432–cysteine 448, cysteine 450–cysteine 461, cysteine 477–cysteine 482, cysteine 487–cysteine 507, cysteine 523–cysteine 543, cysteine 546–cysteine 566, cysteine 582–cysteine 602, cysteine 605–cysteine 625, cysteine 643–cysteine 663, cysteine 683–cysteine 703, and cysteine 719–cysteine 940. An EGF-like 2; calcium-binding domain is found at 326–363; that stretch reads DVDECRYHPCYPGVRCVNLAPGFRCDACPVGFTGPMMQ. An EGF-like 3; calcium-binding domain is found at 379-419; it reads DIDECRNGACVLNSICINTLGSYRCGPCKPGYIGDQMRGCK. In terms of domain architecture, EGF-like 4 spans 420–462; that stretch reads MERNCRDPELNPCSVNAQCIEERQGDVTCVCGVGWAGDGYICG. TSP type-3 repeat units follow at residues 463-495, 496-531, 532-554, 555-590, 591-613, 614-651, 652-691, and 692-727; these read KDVD…NSGQ, EDAD…NVDQ, RNSD…NNDQ, KDTD…NSDQ, EDRD…NPNQ, SDVD…NSAQ, LDTD…NPAQ, and EDSN…EVTL. Residues 562-564 carry the Cell attachment site motif; that stretch reads KGD. The segment at 581 to 671 is disordered; it reads NCQKVPNSDQ…ECDDDDDNDG (91 aa). A glycan (N-linked (GlcNAc...) asparagine) is linked at asparagine 612. The span at 640-652 shows a compositional bias: polar residues; it reads TDNCPTVINSAQL. Residues 660-671 show a composition bias toward acidic residues; it reads GDECDDDDDNDG. Positions 731 to 945 constitute a TSP C-terminal domain; sequence RAYQTVVLDP…LKYRCNDTIP (215 aa). The N-linked (GlcNAc...) asparagine glycan is linked to asparagine 941.

Belongs to the thrombospondin family. As to quaternary structure, homopentamer; disulfide-linked. Interacts with PTBP3. Interacts (via EGF-like 3; calcium-binding domain) with ATF6 and facilitates its processing, activation and nuclear translocation. Interacts with NOTCH1.

The protein resides in the endoplasmic reticulum. It is found in the sarcoplasmic reticulum. The protein localises to the secreted. It localises to the extracellular space. Its subcellular location is the extracellular matrix. Functionally, adhesive glycoprotein that mediates cell-to-cell and cell-to-matrix interactions and is involved in various processes including cellular proliferation, migration, adhesion and attachment, inflammatory response to CNS injury, regulation of vascular inflammation and adaptive responses of the heart to pressure overload and in myocardial function and remodeling. Binds to structural extracellular matrix (ECM) proteins and modulates the ECM in response to tissue damage, contributing to cardioprotective and adaptive ECM remodeling. Plays a role in ER stress response, via its interaction with the activating transcription factor 6 alpha (ATF6) which produces adaptive ER stress response factors and protects myocardium from pressure overload. May contribute to spinal presynaptic hypersensitivity and neuropathic pain states after peripheral nerve injury. May play a role in regulating protective astrogenesis from the subventricular zone (SVZ) niche after injury in a NOTCH1-dependent manner. The chain is Thrombospondin-4 (THBS4) from Bos taurus (Bovine).